The primary structure comprises 399 residues: 26S proteasome regulatory subunit 10B homolog A (399 aa).

Thr-2 carries the N-acetylthreonine modification. 180 to 187 lines the ATP pocket; sequence GPPGTGKT. Lys-203 is covalently cross-linked (Glycyl lysine isopeptide (Lys-Gly) (interchain with G-Cter in ubiquitin)).

This sequence belongs to the AAA ATPase family. Component of the 19S regulatory particle (RP/PA700) base subcomplex of the 26S proteasome. The 26S proteasome is composed of a core protease (CP), known as the 20S proteasome, capped at one or both ends by the 19S regulatory particle (RP/PA700). The RP/PA700 complex is composed of at least 17 different subunits in two subcomplexes, the base and the lid, which form the portions proximal and distal to the 20S proteolytic core, respectively.

The protein localises to the cytoplasm. It localises to the nucleus. In terms of biological role, the 26S proteasome is involved in the ATP-dependent degradation of ubiquitinated proteins. The regulatory (or ATPase) complex confers ATP dependency and substrate specificity to the 26S complex. The polypeptide is 26S proteasome regulatory subunit 10B homolog A (RPT4A) (Arabidopsis thaliana (Mouse-ear cress)).